A 67-amino-acid polypeptide reads, in one-letter code: Large ribosomal subunit protein uL29 (67 aa).

This sequence belongs to the universal ribosomal protein uL29 family.

The chain is Large ribosomal subunit protein uL29 from Wolbachia pipientis subsp. Culex pipiens (strain wPip).